The sequence spans 1016 residues: MSSVAEDNSFTCDIATIFVAICRNPPANPSDSLFQYEISTLYQEAHSRWLKPPEVLFILQNHESLTLTNTAPQRPTSGSLLLFNKRVLKFFRKDGHQWRRKRDGRAIAEAHERLKVGNAEALNCYYAHGEQDPTFRRRIYWMLDPEYEHIVLVHYRDVSEREEGQQTGGQVYQFAPILSTQNVSYNQYIGDSSDIYQQSSTSPGVAEVNSNLEGSASSSEFGQALKMLKEQLSIGDEHVNSVDPHYIQPESLDSLQFLEYSDIDHLAQPTTVYQRPENNKLERCYGGNFGAQYSAKNDSNKLERCYGGYVGGAEYHSSNLMLVKNGSGPSGGTGGSGDQGSESWKDVLEACEASIPLNSEGSTPSSAKGLLAGLQEDSNWSYSNQVDQSTFLLPQDLGSFQLPASYSALVAPENNGEYCGMMEDGMKIGLPFEQEMRVTGAHNQKFTIQDISPDWGYANETTKVIIIGSFLCDPTESTWSCMFGNAQVPFEIIKEGVIRCEAPQCGPGKVNLCITSGDGLLCSEIREFEYREKPDTCCPKCSEPQTSDMSTSPNELILLVRFVQTLLSDRSSERKSNLESGNDKLLTKLKADDDQWRHVIGTIIDGSASSTSTVDWLLQELLKDKLDTWLSSRSCDEDYITCSLSKQEQGIIHMVAGLGFEWAFYPILAHGVNVDFRDIKGWSALHWAAQFGSEKMVAALIASGASAGAVTDPSRQDPNGKTAASIAASNGHKGLAGYLSEVALTNHLSSLTLEETENSKDTAQVQTEKTLNSISEQSPSGNEDQVSLKDTLAAVRNAAQAAARIQAAFRAHSFRKRKQREAALVACLQEYGMYCEDIEGISAMSKLTFGKGRNYNSAALSIQKNFRGYKDRKCFLELRQKVVKIQAHVRGYQIRKNYKVICWAVRILDKVVLRWRRKGVGLRGFRQDVESTEDSEDEDILKVFRKQKVDVAVNEAFSRVLSMSNSPEARQQYHRVLKRYCQTKAELGKTETLVGEDDDGLFDIADMEYDTLFSLP.

The CG-1 DNA-binding region spans 38–164; that stretch reads ISTLYQEAHS…YRDVSEREEG (127 aa). Residues 324–343 are disordered; the sequence is KNGSGPSGGTGGSGDQGSES. Residues 328–338 show a composition bias toward gly residues; that stretch reads GPSGGTGGSGD. ANK repeat units follow at residues 647-676, 680-709, and 719-748; these read QEQGIIHMVAGLGFEWAFYPILAHGVNVDF, KGWSALHWAAQFGSEKMVAALIASGASAGA, and NGKTAASIAASNGHKGLAGYLSEVALTNHL. Residues 753-786 form a disordered region; the sequence is LEETENSKDTAQVQTEKTLNSISEQSPSGNEDQV. Polar residues predominate over residues 761–785; it reads DTAQVQTEKTLNSISEQSPSGNEDQ. IQ domains lie at 798–827, 855–884, and 878–907; these read AAQAAARIQAAFRAHSFRKRKQREAALVAC, YNSAALSIQKNFRGYKDRKCFLELRQKVVK, and LRQKVVKIQAHVRGYQIRKNYKVICWAVRI. The calmodulin-binding stretch occupies residues 903-925; the sequence is WAVRILDKVVLRWRRKGVGLRGF. Ser-935 and Ser-962 each carry phosphoserine.

The protein belongs to the CAMTA family. As to expression, expressed in roots, stems, leaves, flowers and siliques.

It localises to the nucleus. Functionally, transcription activator that binds to the DNA consensus sequence 5'-[ACG]CGCG[GTC]-3'. Regulates transcriptional activity in response to calcium signals. Binds calmodulin in a calcium-dependent manner. Involved together with CAMTA2 and CAMTA3 in the positive regulation of a general stress response. This Arabidopsis thaliana (Mouse-ear cress) protein is Calmodulin-binding transcription activator 4.